The primary structure comprises 387 residues: Gibberellic acid methyltransferase 2 (387 aa).

Y33 lines the S-adenosyl-L-homocysteine pocket. Q40 is a gibberellin A4 binding site. C74, N79, D113, L114, S146, and F147 together coordinate S-adenosyl-L-homocysteine. Gibberellin A4-binding residues include H167 and W168. Mg(2+) contacts are provided by N185, R275, D276, F278, and N279.

This sequence belongs to the methyltransferase superfamily. Type-7 methyltransferase family. SABATH subfamily. Requires Mg(2+) as cofactor. As to expression, expressed in siliques and germinating seeds. Not detected in leaves, stems, flowers and roots.

It catalyses the reaction gibberellin A4 + S-adenosyl-L-methionine = O-methyl gibberellin A4 + S-adenosyl-L-homocysteine. Down-regulated by Zn(2+), Cu(2+) and Fe(3+). No effect of K(+), NH(4+), Na(+), Ca(2+), Mg(2+), Mn(2+) and Fe(2+). Its function is as follows. Methylates the carboxyl group of several gibberellins (GAs). Substrate preference is GA4 &gt; GA34 &gt; GA9 &gt; GA3 &gt; GA1 &gt; GA51 &gt; GA20. No activity with diterpenes abietic acid and ent-kaurenoic acid. The sequence is that of Gibberellic acid methyltransferase 2 (GAMT2) from Arabidopsis thaliana (Mouse-ear cress).